A 299-amino-acid chain; its full sequence is Recombination-associated protein RdgC (299 aa).

The protein belongs to the RdgC family.

It is found in the cytoplasm. The protein localises to the nucleoid. May be involved in recombination. In Neisseria meningitidis serogroup C (strain 053442), this protein is Recombination-associated protein RdgC.